A 95-amino-acid chain; its full sequence is Integration host factor subunit beta (95 aa).

Residues 56–76 form a disordered region; sequence RAPRTGRNPKTGTSVELDGKY.

The protein belongs to the bacterial histone-like protein family. As to quaternary structure, heterodimer of an alpha and a beta chain.

Functionally, this protein is one of the two subunits of integration host factor, a specific DNA-binding protein that functions in genetic recombination as well as in transcriptional and translational control. This chain is Integration host factor subunit beta, found in Shewanella woodyi (strain ATCC 51908 / MS32).